The chain runs to 202 residues: Endothelin-1 (202 aa).

A signal peptide spans 1 to 23 (MDYFSMMVSLLLVAFHGAPETAA). Residues 24–49 (SGTELSTGAENPGEKPPASAPWRPRR) are disordered. Residues 24-50 (SGTELSTGAENPGEKPPASAPWRPRRS) constitute a propeptide that is removed on maturation. Disulfide bonds link C53/C67 and C55/C63. A propeptide spanning residues 74-202 (VNTPGHIVPY…EQKVTHNRTH (129 aa)) is cleaved from the precursor. An endothelin-like region spans residues 110–124 (CQCTSPHDKKCWNFC).

It belongs to the endothelin/sarafotoxin family.

The protein resides in the secreted. Its function is as follows. Endothelins are endothelium-derived vasoconstrictor peptides. Probable ligand for G-protein coupled receptors EDNRA and EDNRB which activates PTK2B, BCAR1, BCAR3 and, GTPases RAP1 and RHOA cascade in glomerular mesangial cells. Also binds the DEAR/FBXW7-AS1 receptor. Promotes mesenteric arterial wall remodeling via activation of ROCK signaling and subsequent colocalization of NFATC3 with F-actin filaments. NFATC3 then translocates to the nucleus where it subsequently promotes the transcription of the smooth muscle hypertrophy and differentiation marker ACTA2. This is Endothelin-1 (EDN1) from Oryctolagus cuniculus (Rabbit).